Consider the following 184-residue polypeptide: ESX-1 secretion-associated protein EspD (184 aa).

The segment at 33–56 is disordered; the sequence is IGVGSAATPDTGPDLDNAHGQAET.

The protein resides in the secreted. In terms of biological role, required for ESX-1 function. Required for the maintenance of adequate cellular levels of both EspA and EspC. Facilitates EsxA secretion. This chain is ESX-1 secretion-associated protein EspD, found in Mycobacterium tuberculosis (strain CDC 1551 / Oshkosh).